Reading from the N-terminus, the 69-residue chain is Sec-independent protein translocase protein TatA (69 aa).

Residues 1 to 21 (MFGKLGMPELVLIFAVALVIF) form a helical membrane-spanning segment.

This sequence belongs to the TatA/E family. Forms a complex with TatC.

It localises to the cell membrane. Its function is as follows. Part of the twin-arginine translocation (Tat) system that transports large folded proteins containing a characteristic twin-arginine motif in their signal peptide across membranes. TatA could form the protein-conducting channel of the Tat system. This Alkaliphilus metalliredigens (strain QYMF) protein is Sec-independent protein translocase protein TatA.